The chain runs to 20 residues: Beta-fibrinogenase jerdofibrase (20 aa).

A Peptidase S1 domain is found at 1–20; the sequence is VIGGDECNINEHPFLVLVYY.

This sequence belongs to the peptidase S1 family. Snake venom subfamily. Monomer. As to expression, expressed by the venom gland.

It is found in the secreted. Inhibited by PMSF and soybean trypsin inhibitor. Partially inhibited by DTT and cysteine. Not affected by EDTA. In terms of biological role, fibrin(ogen)olytic serine protease degrades Bbeta-chain of human fibrinogen (FGB) and shows a lower activity on Aa-chain (FGA). Also degrades fibrin directly. Releases fibrinopeptide B and a small amount of fibrinopeptide A. Has also be shown to catalyze the hydrolysis of some chromogenic substrates such as S2238, S2160, S2302 and S2251. This is Beta-fibrinogenase jerdofibrase from Protobothrops jerdonii (Jerdon's pitviper).